A 2103-amino-acid polypeptide reads, in one-letter code: Orsellinic acid synthase (2103 aa).

The interval 17–232 is N-terminal acylcarrier protein transacylase domain (SAT); that stretch reads DAVHDLNVRS…KRPELAHATI (216 aa). A Ketosynthase family 3 (KS3) domain is found at 348–782; it reads ADAIAVVGMS…GGNVSMLLQD (435 aa). Catalysis depends on for beta-ketoacyl synthase activity residues Cys525, His660, and His702. Residues 881 to 1197 form a malonyl-CoA:ACP transacylase (MAT) domain region; that stretch reads VFTFTGQGAQ…RRGGDDWQSV (317 aa). Ser973 acts as the For acyl/malonyl transferase activity in catalysis. The tract at residues 1272-1409 is N-terminal hotdog fold; the sequence is HAVEKLQREE…GQPDSAVRRD (138 aa). One can recognise a PKS/mFAS DH domain in the interval 1272–1582; sequence HAVEKLQREE…FKKLERDFFA (311 aa). The interval 1303 to 1579 is product template (PT) domain; the sequence is GHVVDESAIC…DICFKKLERD (277 aa). The active-site Proton acceptor; for dehydratase activity is the His1304. The tract at residues 1433–1582 is C-terminal hotdog fold; it reads VHAMDTALFY…FKKLERDFFA (150 aa). The active-site Proton donor; for dehydratase activity is the Asp1493. Residues 1592-1638 are disordered; it reads STKPVAAAPAKSMAKRARQLAPSPSPSSSSGSNTPMSRSPTPSSVSD. Composition is skewed to low complexity over residues 1594 to 1603 and 1617 to 1631; these read KPVAAAPAKS and PSSS…SRSP. Carrier domains are found at residues 1640–1716 and 1741–1815; these read VDLG…GGSA and PAPS…DDDA. Ser1676 carries the O-(pantetheine 4'-phosphoryl)serine modification. Residues 1722-1743 form a disordered region; it reads EDITKPTPSPEQTQARKQGPAP. O-(pantetheine 4'-phosphoryl)serine is present on Ser1775. The tract at residues 1809–1838 is disordered; sequence EALDDDAEEESAPAQTSTNPAKETTIDSSR. Residues 1810 to 1819 are compositionally biased toward acidic residues; it reads ALDDDAEEES. Residues 1823–1836 are compositionally biased toward polar residues; sequence QTSTNPAKETTIDS. A thioesterase (TE) domain region spans residues 1849-2082; sequence ASYIHLKALP…TVNGDHFSMM (234 aa).

The enzyme catalyses 3 malonyl-CoA + acetyl-CoA + 2 H(+) = orsellinate + 3 CO2 + 4 CoA. It functions in the pathway secondary metabolite biosynthesis. Functionally, non-reducing polyketide synthase; part of the gene cluster that mediates the biosynthesis of orsellinic acid, as well as of the cathepsin K inhibitors F9775 A and F9775 B. The non-reducing polyketide synthase orsA produces orsellinic acid by condensing acetyl-CoA with 3 malonyl-CoA units. Further modifications by the decarboxylase orsB and the tyrosinase-like protein orsC lead to the production of F9775 A and F9775 B. The functions of orsD and orsE remain unclear since only orsB and orsC are required to convert orsellinic acid into F9775 A and F9775 B. The chain is Orsellinic acid synthase from Emericella nidulans (strain FGSC A4 / ATCC 38163 / CBS 112.46 / NRRL 194 / M139) (Aspergillus nidulans).